Here is a 534-residue protein sequence, read N- to C-terminus: NAD(P)H-quinone oxidoreductase chain 4 1 (534 aa).

The next 14 helical transmembrane spans lie at 6-26 (IPWLTTAIAFPLLAALVIPLI), 34-54 (IRWYTLGVALTDFALLVTAFW), 87-107 (LSMPLIILATLITTLATLAAW), 113-133 (PKLFAGLILVMLSAQIGVFAV), 136-156 (LLLFFIMWELELVPVYLLISI), 169-189 (FILYTALGSVFILASTLALAF), 209-229 (ALELLAYAGFLIGFGVKLPIF), 243-263 (SAPVSMILAGVLLKMGGYGLI), 277-297 (FAPLLIVLGIVNIVYGALTAF), 311-331 (ISHMGFVLVGIASFTDLGMNG), 332-352 (AVLQMLSHGFIAAALFFLSGV), 376-396 (FAMFTAAAMASLALPGMSGFV), 418-438 (IAIFLTAVGVILTPIYLLSML), and 464-484 (IFVAVCLLAPIIAIGLYPKLA).

It belongs to the complex I subunit 4 family.

The protein resides in the cellular thylakoid membrane. It catalyses the reaction a plastoquinone + NADH + (n+1) H(+)(in) = a plastoquinol + NAD(+) + n H(+)(out). The enzyme catalyses a plastoquinone + NADPH + (n+1) H(+)(in) = a plastoquinol + NADP(+) + n H(+)(out). Functionally, NDH-1 shuttles electrons from NAD(P)H, via FMN and iron-sulfur (Fe-S) centers, to quinones in the respiratory chain. The immediate electron acceptor for the enzyme in this species is believed to be plastoquinone. Couples the redox reaction to proton translocation (for every two electrons transferred, four hydrogen ions are translocated across the cytoplasmic membrane), and thus conserves the redox energy in a proton gradient. The protein is NAD(P)H-quinone oxidoreductase chain 4 1 of Picosynechococcus sp. (strain ATCC 27264 / PCC 7002 / PR-6) (Agmenellum quadruplicatum).